The sequence spans 131 residues: Transcription antitermination protein NusB (131 aa).

This sequence belongs to the NusB family.

Functionally, involved in transcription antitermination. Required for transcription of ribosomal RNA (rRNA) genes. Binds specifically to the boxA antiterminator sequence of the ribosomal RNA (rrn) operons. This is Transcription antitermination protein NusB from Campylobacter hominis (strain ATCC BAA-381 / DSM 21671 / CCUG 45161 / LMG 19568 / NCTC 13146 / CH001A).